Reading from the N-terminus, the 481-residue chain is Proline--tRNA ligase (481 aa).

It belongs to the class-II aminoacyl-tRNA synthetase family. ProS type 3 subfamily. Homodimer.

Its subcellular location is the cytoplasm. The catalysed reaction is tRNA(Pro) + L-proline + ATP = L-prolyl-tRNA(Pro) + AMP + diphosphate. In terms of biological role, catalyzes the attachment of proline to tRNA(Pro) in a two-step reaction: proline is first activated by ATP to form Pro-AMP and then transferred to the acceptor end of tRNA(Pro). The chain is Proline--tRNA ligase from Pelodictyon phaeoclathratiforme (strain DSM 5477 / BU-1).